The sequence spans 196 residues: Flagellin B2 (196 aa).

A propeptide spanning residues 1-12 (MFEFITDEDERG) is cleaved from the precursor.

The protein belongs to the archaeal flagellin family. Post-translationally, glycosylated.

It is found in the archaeal flagellum. Functionally, flagellin is the subunit protein which polymerizes to form the filaments of archaeal flagella. This Halobacterium salinarum (strain ATCC 700922 / JCM 11081 / NRC-1) (Halobacterium halobium) protein is Flagellin B2 (flaB2).